Here is a 999-residue protein sequence, read N- to C-terminus: Translation initiation factor IF-2 (999 aa).

The tract at residues 50–407 (AFVNNTGSPA…RGQGQTVRLS (358 aa)) is disordered. 2 stretches are compositionally biased toward pro residues: residues 60–89 (PAAP…PPGG) and 96–121 (PMPP…PPQS). The segment covering 136–162 (VAAAEARAAALKAEQEAAVKAAQAARQ) has biased composition (low complexity). Over residues 163–173 (QQRDNVRREPP) the composition is skewed to basic and acidic residues. A compositionally biased stretch (pro residues) spans 179–194 (RPGPRPGPGAMPPRPG). Residues 213–222 (GGRPPARGAG) are compositionally biased toward low complexity. Pro residues predominate over residues 244–266 (RPSPASMPPRPSPASMPPRPSPA). Residues 275-367 (RPGGPGSGRP…GAAGAFGRPG (93 aa)) show a composition bias toward gly residues. Residues 371-380 (TRGRKSKKQR) are compositionally biased toward basic residues. Positions 388–405 (SAPTMSSGAPRGQGQTVR) are enriched in polar residues. The 173-residue stretch at 490-662 (SRPPVVTVMG…VLLTADASLE (173 aa)) folds into the tr-type G domain. The G1 stretch occupies residues 499–506 (GHVDHGKT). GTP is bound at residue 499 to 506 (GHVDHGKT). Positions 524-528 (GITQH) are G2. The tract at residues 549-552 (DTPG) is G3. GTP contacts are provided by residues 549-553 (DTPGH) and 603-606 (NKID). The G4 stretch occupies residues 603-606 (NKID). The segment at 639–641 (AAK) is G5.

The protein belongs to the TRAFAC class translation factor GTPase superfamily. Classic translation factor GTPase family. IF-2 subfamily.

It localises to the cytoplasm. One of the essential components for the initiation of protein synthesis. Protects formylmethionyl-tRNA from spontaneous hydrolysis and promotes its binding to the 30S ribosomal subunits. Also involved in the hydrolysis of GTP during the formation of the 70S ribosomal complex. This is Translation initiation factor IF-2 from Salinispora tropica (strain ATCC BAA-916 / DSM 44818 / JCM 13857 / NBRC 105044 / CNB-440).